The chain runs to 231 residues: Large ribosomal subunit protein uL1 (231 aa).

The protein belongs to the universal ribosomal protein uL1 family. Part of the 50S ribosomal subunit.

Functionally, binds directly to 23S rRNA. The L1 stalk is quite mobile in the ribosome, and is involved in E site tRNA release. Protein L1 is also a translational repressor protein, it controls the translation of the L11 operon by binding to its mRNA. The polypeptide is Large ribosomal subunit protein uL1 (Allorhizobium ampelinum (strain ATCC BAA-846 / DSM 112012 / S4) (Agrobacterium vitis (strain S4))).